The sequence spans 608 residues: Threonine--tRNA ligase (608 aa).

The interval 1–144 (MRILLIHSDY…SRTITAEEEE (144 aa)) is editing domain. The segment at 195–489 (PHVKLMREKE…ELDEKAPMLP (295 aa)) is catalytic. The Zn(2+) site is built by cysteine 286, histidine 338, and histidine 459.

This sequence belongs to the class-II aminoacyl-tRNA synthetase family. In terms of assembly, homodimer. Zn(2+) is required as a cofactor.

The protein resides in the cytoplasm. The enzyme catalyses tRNA(Thr) + L-threonine + ATP = L-threonyl-tRNA(Thr) + AMP + diphosphate + H(+). In terms of biological role, catalyzes the attachment of threonine to tRNA(Thr) in a two-step reaction: L-threonine is first activated by ATP to form Thr-AMP and then transferred to the acceptor end of tRNA(Thr). Also edits incorrectly charged L-seryl-tRNA(Thr). The chain is Threonine--tRNA ligase from Methanobrevibacter smithii (strain ATCC 35061 / DSM 861 / OCM 144 / PS).